Consider the following 242-residue polypeptide: Glutamine transport ATP-binding protein GlnQ (242 aa).

Positions 2–236 constitute an ABC transporter domain; that stretch reads IYFHQVNKYY…PKEERAKVFL (235 aa). Position 34-41 (34-41) interacts with ATP; the sequence is GPSGSGKS.

It belongs to the ABC transporter superfamily.

It is found in the cell membrane. Its function is as follows. Part of the binding-protein-dependent transport system for glutamine. Probably responsible for energy coupling to the transport system. The chain is Glutamine transport ATP-binding protein GlnQ (glnQ) from Geobacillus stearothermophilus (Bacillus stearothermophilus).